Reading from the N-terminus, the 79-residue chain is Ketoisovalerate oxidoreductase subunit VorC (79 aa).

4Fe-4S ferredoxin-type domains are found at residues 4–33 (AYPV…MSNK) and 40–70 (HYVE…VHIE). [4Fe-4S] cluster is bound by residues C13, C16, C19, C23, C49, C52, C55, and C59.

Heterotrimer of the VorA, VorB and VorC subunits. [4Fe-4S] cluster is required as a cofactor.

The catalysed reaction is 3-methyl-2-oxobutanoate + 2 oxidized [2Fe-2S]-[ferredoxin] + CoA = 2-methylpropanoyl-CoA + 2 reduced [2Fe-2S]-[ferredoxin] + CO2 + H(+). This chain is Ketoisovalerate oxidoreductase subunit VorC (vorC), found in Methanothermobacter marburgensis (strain ATCC BAA-927 / DSM 2133 / JCM 14651 / NBRC 100331 / OCM 82 / Marburg) (Methanobacterium thermoautotrophicum).